We begin with the raw amino-acid sequence, 509 residues long: ATP synthase subunit alpha (509 aa).

171 to 178 (GDRKTGKT) is an ATP binding site.

This sequence belongs to the ATPase alpha/beta chains family. In terms of assembly, F-type ATPases have 2 components, CF(1) - the catalytic core - and CF(0) - the membrane proton channel. CF(1) has five subunits: alpha(3), beta(3), gamma(1), delta(1), epsilon(1). CF(0) has three main subunits: a(1), b(2) and c(9-12). The alpha and beta chains form an alternating ring which encloses part of the gamma chain. CF(1) is attached to CF(0) by a central stalk formed by the gamma and epsilon chains, while a peripheral stalk is formed by the delta and b chains.

The protein resides in the cell inner membrane. It carries out the reaction ATP + H2O + 4 H(+)(in) = ADP + phosphate + 5 H(+)(out). Its function is as follows. Produces ATP from ADP in the presence of a proton gradient across the membrane. The alpha chain is a regulatory subunit. The sequence is that of ATP synthase subunit alpha from Ehrlichia canis (strain Jake).